We begin with the raw amino-acid sequence, 229 residues long: ATP synthase subunit a 3 (229 aa).

The next 6 helical transmembrane spans lie at 25–45 (ADAV…SFLA), 86–106 (VATI…PGFF), 111–131 (NINT…VVGI), 142–162 (FCGP…IGHL), 181–201 (LVLI…MMLM), and 202–222 (GVLV…IYIQ).

It belongs to the ATPase A chain family. F-type ATPases have 2 components, CF(1) - the catalytic core - and CF(0) - the membrane proton channel. CF(1) has five subunits: alpha(3), beta(3), gamma(1), delta(1), epsilon(1). CF(0) has three main subunits: a(1), b(2) and c(9-12). The alpha and beta chains form an alternating ring which encloses part of the gamma chain. CF(1) is attached to CF(0) by a central stalk formed by the gamma and epsilon chains, while a peripheral stalk is formed by the delta and b chains.

The protein localises to the cell inner membrane. Its function is as follows. Key component of the proton channel; it plays a direct role in the translocation of protons across the membrane. The chain is ATP synthase subunit a 3 from Pelobacter propionicus (strain DSM 2379 / NBRC 103807 / OttBd1).